The primary structure comprises 939 residues: Translation initiation factor IF-2 (939 aa).

2 disordered regions span residues L51–K81 and V137–A353. Positions N181–K210 are enriched in basic and acidic residues. The segment covering P259 to G277 has biased composition (low complexity). Residues R300–P312 are compositionally biased toward basic and acidic residues. The tr-type G domain occupies G437–K606. The tract at residues G446–T453 is G1. G446–T453 contacts GTP. Positions G471–H475 are G2. The interval D492–G495 is G3. GTP-binding positions include D492–H496 and N546–D549. The interval N546 to D549 is G4. Positions S582–K584 are G5.

Belongs to the TRAFAC class translation factor GTPase superfamily. Classic translation factor GTPase family. IF-2 subfamily.

The protein resides in the cytoplasm. Its function is as follows. One of the essential components for the initiation of protein synthesis. Protects formylmethionyl-tRNA from spontaneous hydrolysis and promotes its binding to the 30S ribosomal subunits. Also involved in the hydrolysis of GTP during the formation of the 70S ribosomal complex. This is Translation initiation factor IF-2 from Desulfotalea psychrophila (strain LSv54 / DSM 12343).